The following is a 293-amino-acid chain: Aspartate carbamoyltransferase catalytic subunit (293 aa).

Residues R50 and T51 each coordinate carbamoyl phosphate. Residue K78 participates in L-aspartate binding. Carbamoyl phosphate contacts are provided by R100, H127, and Q130. The L-aspartate site is built by R160 and R210. Positions 253 and 254 each coordinate carbamoyl phosphate.

This sequence belongs to the aspartate/ornithine carbamoyltransferase superfamily. ATCase family. In terms of assembly, heterododecamer (2C3:3R2) of six catalytic PyrB chains organized as two trimers (C3), and six regulatory PyrI chains organized as three dimers (R2).

It carries out the reaction carbamoyl phosphate + L-aspartate = N-carbamoyl-L-aspartate + phosphate + H(+). It functions in the pathway pyrimidine metabolism; UMP biosynthesis via de novo pathway; (S)-dihydroorotate from bicarbonate: step 2/3. Catalyzes the condensation of carbamoyl phosphate and aspartate to form carbamoyl aspartate and inorganic phosphate, the committed step in the de novo pyrimidine nucleotide biosynthesis pathway. This is Aspartate carbamoyltransferase catalytic subunit from Staphylococcus aureus (strain USA300).